The chain runs to 459 residues: Glutamate--tRNA ligase 2 (459 aa).

The 'HIGH' region motif lies at 8–18 (PSPTGYIHIGN). The 'KMSKS' region signature appears at 249–253 (GLSKR). K252 is a binding site for ATP.

The protein belongs to the class-I aminoacyl-tRNA synthetase family. Glutamate--tRNA ligase type 1 subfamily. In terms of assembly, monomer.

The protein localises to the cytoplasm. The catalysed reaction is tRNA(Glu) + L-glutamate + ATP = L-glutamyl-tRNA(Glu) + AMP + diphosphate. Catalyzes the attachment of glutamate to tRNA(Glu) in a two-step reaction: glutamate is first activated by ATP to form Glu-AMP and then transferred to the acceptor end of tRNA(Glu). The chain is Glutamate--tRNA ligase 2 from Bartonella henselae (strain ATCC 49882 / DSM 28221 / CCUG 30454 / Houston 1) (Rochalimaea henselae).